Here is a 425-residue protein sequence, read N- to C-terminus: Probable sucrose-phosphatase 3a (425 aa).

The protein belongs to the sucrose phosphatase family. In terms of assembly, homodimer. The cofactor is Mg(2+).

The catalysed reaction is sucrose 6(F)-phosphate + H2O = sucrose + phosphate. It participates in glycan biosynthesis; sucrose biosynthesis; sucrose from D-fructose 6-phosphate and UDP-alpha-D-glucose: step 2/2. Its function is as follows. Catalyzes the final step of sucrose synthesis. The chain is Probable sucrose-phosphatase 3a (SPP3A) from Arabidopsis thaliana (Mouse-ear cress).